The following is a 745-amino-acid chain: Cysteine protease atg4 (745 aa).

3 stretches are compositionally biased toward low complexity: residues 29–42, 52–64, and 194–215; these read QQSY…APQQ, SPTS…SSST, and NNNS…NNNN. Disordered regions lie at residues 29–68 and 192–215; these read QQSY…AMGN and FQNN…NNNN. Catalysis depends on Cys262, which acts as the Nucleophile. 2 disordered regions span residues 344–363 and 439–480; these read LNRG…KEEE and QNNN…NGYN. Residues 439–477 are compositionally biased toward low complexity; it reads QNNNKNNNNNNPTTTTTTTTTATSSNNNNNQSPPSRVPN. Catalysis depends on residues Asp562 and His564. Residues 686-745 form a disordered region; it reads HIPYNPNNNQNNNQNNNNNNNKNNNNNTNQQQTPNYPPKLNTYQPDFSSDGEIDDFTMVG. The span at 688–719 shows a compositional bias: low complexity; the sequence is PYNPNNNQNNNQNNNNNNNKNNNNNTNQQQTP. The segment covering 734–745 has biased composition (acidic residues); sequence SDGEIDDFTMVG.

This sequence belongs to the peptidase C54 family.

It is found in the cytoplasm. It carries out the reaction [protein]-C-terminal L-amino acid-glycyl-phosphatidylethanolamide + H2O = [protein]-C-terminal L-amino acid-glycine + a 1,2-diacyl-sn-glycero-3-phosphoethanolamine. Cysteine protease that plays a key role in autophagy by mediating both proteolytic activation and delipidation of ATG8 family proteins. The protease activity is required for proteolytic activation of ATG8 family proteins: cleaves the C-terminal amino acid of ATG8 proteins to reveal a C-terminal glycine. Exposure of the glycine at the C-terminus is essential for ATG8 proteins conjugation to phosphatidylethanolamine (PE) and insertion to membranes, which is necessary for autophagy. In addition to the protease activity, also mediates delipidation of PE-conjugated ATG8 proteins. This Dictyostelium discoideum (Social amoeba) protein is Cysteine protease atg4 (atg4-1).